Here is a 1186-residue protein sequence, read N- to C-terminus: Cytotoxicity-associated immunodominant antigen (1186 aa).

Basic and acidic residues predominate over residues 630–649; the sequence is EKEVEKKLESKSGNKNKMEA. Residues 630 to 652 are disordered; the sequence is EKEVEKKLESKSGNKNKMEAKAQ.

Its function is as follows. May be necessary for the transcription, folding, export, or function of the cytotoxin. The polypeptide is Cytotoxicity-associated immunodominant antigen (cagA) (Helicobacter pylori (strain ATCC 700392 / 26695) (Campylobacter pylori)).